The following is a 574-amino-acid chain: Adenine deaminase (574 aa).

It belongs to the metallo-dependent hydrolases superfamily. Adenine deaminase family. Requires Mn(2+) as cofactor.

It catalyses the reaction adenine + H2O + H(+) = hypoxanthine + NH4(+). This is Adenine deaminase from Thermosipho africanus (strain TCF52B).